Here is a 354-residue protein sequence, read N- to C-terminus: Ferredoxin--NADP reductase, chloroplastic (354 aa).

The transit peptide at 1–35 (MASLRKPSNHADRACSRRLRVATRVAGRRMCRPVA) directs the protein to the chloroplast. Positions 69–198 (KAPFKAKVRS…TGPTGKVLLL (130 aa)) constitute an FAD-binding FR-type domain. K118 and K124 each carry N6,N6,N6-trimethyllysine. FAD is bound by residues 130–133 (RLYS), 151–153 (CVR), and Y157. Residues S133 and R153 each coordinate NADP(+). An N6,N6-dimethyllysine modification is found at K170. FAD is bound by residues 172–174 (LCS) and T213. NADP(+) is bound by residues T213, 245–246 (VG), 275–276 (SR), K285, 313–314 (GL), and E352.

This sequence belongs to the ferredoxin--NADP reductase type 1 family. FAD is required as a cofactor.

It is found in the plastid. The protein localises to the chloroplast stroma. It localises to the chloroplast thylakoid membrane. It catalyses the reaction 2 reduced [2Fe-2S]-[ferredoxin] + NADP(+) + H(+) = 2 oxidized [2Fe-2S]-[ferredoxin] + NADPH. It functions in the pathway energy metabolism; photosynthesis. Functionally, may play a key role in regulating the relative amounts of cyclic and non-cyclic electron flow to meet the demands of the plant for ATP and reducing power. The polypeptide is Ferredoxin--NADP reductase, chloroplastic (PETH) (Chlamydomonas reinhardtii (Chlamydomonas smithii)).